A 294-amino-acid chain; its full sequence is MHRHHNGLKTAVLFGGIWGVLLLIGAFLASSFRSPGVLLVFVVIGLATSAYSYWNSAGLALRAMRARPVSEAEQPGMHRIVRELSTAARQPMPQLYVSPTMAPNAFATGRNPENAAVCCTEGILQLLDERELRGVLGHELMHVYNRDILTSSVAGALAGVITSIAQFGVFFGSALGGGRDGEERANPLALLLLSLMAPLAASVIQLAISRTREYDADEDGARLTGDPLALASALRKLELGTRQLPLPPERELVNSSHMMIANPFRGQGVARLFSTHPPMAERIARLEALAGYRR.

Transmembrane regions (helical) follow at residues 12–32 and 34–54; these read VLFG…ASSF and SPGV…YSYW. Histidine 138 provides a ligand contact to Zn(2+). The active site involves glutamate 139. Position 142 (histidine 142) interacts with Zn(2+). The next 2 membrane-spanning stretches (helical) occupy residues 152-172 and 188-208; these read SVAG…VFFG and LALL…QLAI. Glutamate 213 contacts Zn(2+).

It belongs to the peptidase M48B family. Zn(2+) is required as a cofactor.

It is found in the cell membrane. This Kineococcus radiotolerans (strain ATCC BAA-149 / DSM 14245 / SRS30216) protein is Protease HtpX homolog.